Consider the following 448-residue polypeptide: Inositol polyphosphate 5-phosphatase K (448 aa).

The catalytic stretch occupies residues 16-318 (IHVVTWNVAS…SDHKPVSGTF (303 aa)). The interval 318 to 448 (FDLELKPLVS…DPLGEAQPQI (131 aa)) is required for interaction with GPR78 and PAK1. The interval 321–448 (ELKPLVSAPL…DPLGEAQPQI (128 aa)) is required for ruffle localization.

Belongs to the inositol 1,4,5-trisphosphate 5-phosphatase type II family. In terms of assembly, interacts with GPR78; necessary for INPP5K localization at the endoplasmic reticulum. Interacts with PAK1; competes with GPR78. As to expression, ubiquitously expressed with highest levels in skeletal muscle, heart and kidney.

Its subcellular location is the endoplasmic reticulum. The protein resides in the cytoplasm. It catalyses the reaction 1D-myo-inositol 1,4,5-trisphosphate + H2O = 1D-myo-inositol 1,4-bisphosphate + phosphate. The enzyme catalyses 1D-myo-inositol 1,3,4,5-tetrakisphosphate + H2O = 1D-myo-inositol 1,3,4-trisphosphate + phosphate. The catalysed reaction is a 1,2-diacyl-sn-glycero-3-phospho-(1D-myo-inositol-4,5-bisphosphate) + H2O = a 1,2-diacyl-sn-glycero-3-phospho-(1D-myo-inositol 4-phosphate) + phosphate. It carries out the reaction a 1,2-diacyl-sn-glycero-3-phospho-(1D-myo-inositol-3,4,5-trisphosphate) + H2O = a 1,2-diacyl-sn-glycero-3-phospho-(1D-myo-inositol-3,4-bisphosphate) + phosphate. It catalyses the reaction 1,2-dioctanoyl-sn-glycero-3-phospho-(1D-myo-inositol-3,4,5-trisphosphate) + H2O = 1,2-dioctanoyl-sn-glycero-3-phospho-(1D-myo-inositol-3,4-bisphosphate) + phosphate. Inositol 5-phosphatase which acts on inositol 1,4,5-trisphosphate, inositol 1,3,4,5-tetrakisphosphate, phosphatidylinositol 4,5-bisphosphate and phosphatidylinositol 3,4,5-trisphosphate. Has 6-fold higher affinity for phosphatidylinositol 4,5-bisphosphate than for inositol 1,4,5-trisphosphate. Negatively regulates assembly of the actin cytoskeleton. Controls insulin-dependent glucose uptake among inositol 3,4,5-trisphosphate phosphatases; therefore, is the specific regulator for insulin signaling in skeletal muscle. This chain is Inositol polyphosphate 5-phosphatase K, found in Homo sapiens (Human).